Reading from the N-terminus, the 172-residue chain is Adenine phosphoribosyltransferase (172 aa).

This sequence belongs to the purine/pyrimidine phosphoribosyltransferase family. Homodimer.

It is found in the cytoplasm. The enzyme catalyses AMP + diphosphate = 5-phospho-alpha-D-ribose 1-diphosphate + adenine. It participates in purine metabolism; AMP biosynthesis via salvage pathway; AMP from adenine: step 1/1. Functionally, catalyzes a salvage reaction resulting in the formation of AMP, that is energically less costly than de novo synthesis. This chain is Adenine phosphoribosyltransferase, found in Staphylococcus aureus (strain Mu3 / ATCC 700698).